We begin with the raw amino-acid sequence, 137 residues long: Large ribosomal subunit protein uL16 (137 aa).

It belongs to the universal ribosomal protein uL16 family. In terms of assembly, part of the 50S ribosomal subunit.

In terms of biological role, binds 23S rRNA and is also seen to make contacts with the A and possibly P site tRNAs. This Rhizobium johnstonii (strain DSM 114642 / LMG 32736 / 3841) (Rhizobium leguminosarum bv. viciae) protein is Large ribosomal subunit protein uL16.